Reading from the N-terminus, the 542-residue chain is Phosphoacetylglucosamine mutase (542 aa).

M1 carries the post-translational modification N-acetylmethionine. Position 62 is a phosphothreonine (T62). S64 acts as the Phosphoserine intermediate in catalysis. 4 residues coordinate Mg(2+): S64, D276, D278, and D280. S64 is modified (phosphoserine). Residues 370-372, 496-500, and R505 contribute to the substrate site; these read EAN and RPSGT.

The protein belongs to the phosphohexose mutase family. Requires Mg(2+) as cofactor. In terms of tissue distribution, found in many tissues except lung. Relatively high expression in pancreas, heart, liver, and placenta, and relatively low expression in brain, skeletal muscle and kidney.

It carries out the reaction N-acetyl-alpha-D-glucosamine 1-phosphate = N-acetyl-D-glucosamine 6-phosphate. Its pathway is nucleotide-sugar biosynthesis; UDP-N-acetyl-alpha-D-glucosamine biosynthesis; N-acetyl-alpha-D-glucosamine 1-phosphate from alpha-D-glucosamine 6-phosphate (route I): step 2/2. Its function is as follows. Catalyzes the conversion of GlcNAc-6-P into GlcNAc-1-P during the synthesis of uridine diphosphate/UDP-GlcNAc, a sugar nucleotide critical to multiple glycosylation pathways including protein N- and O-glycosylation. The polypeptide is Phosphoacetylglucosamine mutase (Homo sapiens (Human)).